A 239-amino-acid chain; its full sequence is Lytic polysaccharide monooxygenase-like protein X325 (239 aa).

The first 24 residues, 1–24, serve as a signal peptide directing secretion; that stretch reads MVLPSSVSQWAALIALLCAGLANA. His25 contacts Cu(2+). Asn41, Asn56, Asn79, Asn117, Asn150, and Asn197 each carry an N-linked (GlcNAc...) asparagine glycan. Intrachain disulfides connect Cys71–Cys176 and Cys141–Cys195. The GPI-anchor amidated serine moiety is linked to residue Ser214. The propeptide at 215–239 is removed in mature form; that stretch reads AAAPKSSLMSVLPVYMVALLSWAMM.

Belongs to the X325 family. Requires Cu(2+) as cofactor.

Its subcellular location is the cell membrane. Its function is as follows. Lytic polysaccharide monooxygenase-like protein that has diverged to biological functions other than polysaccharide degradation since it does not perform oxidative cleavage of polysaccharides. Acts as a cell surface-bound protein that functions in the copper-accumulation pathway. May also act as the major cell wall sensor that regulates MAP kinase-dependent hyphal anastomosis, the fusion of hyphal cells. The protein is Lytic polysaccharide monooxygenase-like protein X325 of Aspergillus fumigatus (strain ATCC MYA-4609 / CBS 101355 / FGSC A1100 / Af293) (Neosartorya fumigata).